The chain runs to 310 residues: Olfactory receptor 5T7 (310 aa).

At 1–23 (MENITEVTEFILMGFTDNADLEI) the chain is on the extracellular side. A glycan (N-linked (GlcNAc...) asparagine) is linked at Asn-3. Residues 24 to 44 (LSFFLFLAIYLFTLMGNLGLI) traverse the membrane as a helical segment. The Cytoplasmic segment spans residues 45 to 52 (TLVIGDSR). The chain crosses the membrane as a helical span at residues 53–73 (LHNPMYYFLSVLSSVDACYST). The Extracellular segment spans residues 74 to 97 (VITPQMVVDFVSEKKVISFIGCAT). A disulfide bridge links Cys-95 with Cys-187. Residues 98–118 (QMFLAVTFGTTECFLLAAMAY) traverse the membrane as a helical segment. Residues 119-131 (DRYVAIHNPLMYV) lie on the Cytoplasmic side of the membrane. A helical membrane pass occupies residues 132–152 (VSMSPRVYVPLIIASYAGGIL). The Extracellular portion of the chain corresponds to 153–194 (HAVIHTVATFRLSFCGSNKISHIFCDIPPLLAISCSDTHFNQ). The helical transmembrane segment at 195-215 (LLLFYCAGFIEVVTILIVLLS) threads the bilayer. The Cytoplasmic segment spans residues 216–235 (YGFILSVILKTRSTEGKRKV). The chain crosses the membrane as a helical span at residues 236–256 (FSTCGSHLMAVSTFHGTVLFM). At 257 to 269 (YVRPSDSYALEHD) the chain is on the extracellular side. A helical transmembrane segment spans residues 270–290 (MMVSIFYSIVIPMLNPLIYSL). At 291-310 (RNKDVKEAIKKVFGKRILCG) the chain is on the cytoplasmic side.

This sequence belongs to the G-protein coupled receptor 1 family.

The protein localises to the cell membrane. Potential odorant receptor. This chain is Olfactory receptor 5T7, found in Mus musculus (Mouse).